The sequence spans 415 residues: MLNDECSILLIDDDVDVLDAYTQMLEQAGYRVRGFTHPFEAKEWVKADWEGIVLSDVCMPGCSGIDLMTLFHQDDDQLPILLITGHGDVPMAVDAVKKGAWDFLQKPVDPGKLLILIEDALRQRRSVIARRQYCQQTLQVELIGRSEWMNQFRQRLQQLAETDIAVWFYGEHGTGRMTGARYLHQLGRNAKGPFVRYELTPENAGQLETFIDQAQGGTLVLSHPEYLTREQQHHLARLQSLEHRPFRLVGVGSASLVEQAAANQIAAELYYCFAMTQIACQSLSQRPDDIEPLFRHYLRKACLRLNHPVPEIAGELLKGIMRRAWPSNVRELANAAELFAVGVLPLAETVNPQLLLQEPTPLDRRVEEYERQIITEALNIHQGRINEVAEYLQIPRKKLYLRMKKYGLSKEHYKF.

Residues Ser7 to Leu121 enclose the Response regulatory domain. Asp56 carries the 4-aspartylphosphate modification. A Sigma-54 factor interaction domain is found at Leu142 to Val341. Gly170–Met177 is a binding site for ATP. Positions Ile385–Lys404 form a DNA-binding region, H-T-H motif.

In terms of processing, phosphorylated by PgtB.

It localises to the cytoplasm. Member of the two-component regulatory system PgtB/PgtA that regulates the inducible phosphoglycerate transport system. When activated by PgtB it acts in conjunction with sigma-54 as a transcriptional activator. The chain is Phosphoglycerate transport system transcriptional regulatory protein PgtA (pgtA) from Salmonella typhimurium (strain LT2 / SGSC1412 / ATCC 700720).